A 141-amino-acid chain; its full sequence is ATP synthase epsilon chain (141 aa).

It belongs to the ATPase epsilon chain family. F-type ATPases have 2 components, CF(1) - the catalytic core - and CF(0) - the membrane proton channel. CF(1) has five subunits: alpha(3), beta(3), gamma(1), delta(1), epsilon(1). CF(0) has three main subunits: a, b and c.

Its subcellular location is the cell inner membrane. In terms of biological role, produces ATP from ADP in the presence of a proton gradient across the membrane. The protein is ATP synthase epsilon chain of Cellvibrio japonicus (strain Ueda107) (Pseudomonas fluorescens subsp. cellulosa).